The sequence spans 147 residues: Lipoprotein signal peptidase (147 aa).

4 helical membrane passes run 10 to 30, 34 to 54, 59 to 79, and 87 to 107; these read ISIFLILLIDQITKYLAIKFL, GIVKLLPFLNLVYVENTGTAF, FLGSGFFIIIALVVTGFLVYM, and WFIYSLIIAGALGNIIDRLIY. Residues D112 and D130 contribute to the active site. Residues 121–141 form a helical membrane-spanning segment; it reads LHWPAFNVADSAISIGIVLFV.

Belongs to the peptidase A8 family.

It localises to the cell inner membrane. The enzyme catalyses Release of signal peptides from bacterial membrane prolipoproteins. Hydrolyzes -Xaa-Yaa-Zaa-|-(S,diacylglyceryl)Cys-, in which Xaa is hydrophobic (preferably Leu), and Yaa (Ala or Ser) and Zaa (Gly or Ala) have small, neutral side chains.. Its pathway is protein modification; lipoprotein biosynthesis (signal peptide cleavage). Functionally, this protein specifically catalyzes the removal of signal peptides from prolipoproteins. The sequence is that of Lipoprotein signal peptidase from Thermodesulfovibrio yellowstonii (strain ATCC 51303 / DSM 11347 / YP87).